Here is a 111-residue protein sequence, read N- to C-terminus: Distal membrane-arm assembly complex protein 1 (111 aa).

A compositionally biased stretch (polar residues) spans 1 to 11; the sequence is MGSSFSGSTEF. The disordered stretch occupies residues 1–40; it reads MGSSFSGSTEFSAPAPPTVSTAVPANPPAKSAVPASPARD. Positions 18-38 are enriched in low complexity; the sequence is TVSTAVPANPPAKSAVPASPA. 2 helical membrane passes run 51-68 and 81-101; these read VLSG…YLVA and GTVL…VVLV.

Interacts with incompletely assembled mitochondrial NADH:ubiquinone oxidoreductase complex (complex I).

Its subcellular location is the mitochondrion inner membrane. In terms of biological role, required for the assembly of the mitochondrial NADH:ubiquinone oxidoreductase complex (complex I). Involved in the assembly of the distal region of complex I. The protein is Distal membrane-arm assembly complex protein 1 of Mus musculus (Mouse).